The following is a 504-amino-acid chain: Maturase K (504 aa).

Belongs to the intron maturase 2 family. MatK subfamily.

It localises to the plastid. The protein resides in the chloroplast. Its function is as follows. Usually encoded in the trnK tRNA gene intron. Probably assists in splicing its own and other chloroplast group II introns. The chain is Maturase K from Erythrina crista-galli (Cockspur coral tree).